A 516-amino-acid chain; its full sequence is Tyrosine decarboxylase 3 (516 aa).

N6-(pyridoxal phosphate)lysine is present on Lys-319.

Belongs to the group II decarboxylase family. As to quaternary structure, homodimer. Requires pyridoxal 5'-phosphate as cofactor.

It carries out the reaction L-tyrosine + H(+) = tyramine + CO2. The chain is Tyrosine decarboxylase 3 (TYRDC-3) from Petroselinum crispum (Parsley).